Here is a 258-residue protein sequence, read N- to C-terminus: 5'-nucleotidase SurE (258 aa).

Residues D9, D10, S42, and N96 each contribute to the a divalent metal cation site.

Belongs to the SurE nucleotidase family. Requires a divalent metal cation as cofactor.

Its subcellular location is the cytoplasm. The catalysed reaction is a ribonucleoside 5'-phosphate + H2O = a ribonucleoside + phosphate. Nucleotidase that shows phosphatase activity on nucleoside 5'-monophosphates. The chain is 5'-nucleotidase SurE from Campylobacter jejuni subsp. jejuni serotype O:2 (strain ATCC 700819 / NCTC 11168).